A 542-amino-acid polypeptide reads, in one-letter code: Major facilitator superfamily domain-containing protein 6-like (542 aa).

A run of 11 helical transmembrane segments spans residues 46–66, 89–109, 198–218, 246–266, 272–292, 321–341, 352–372, 381–401, 404–424, 444–464, and 469–489; these read LGLS…LALL, LLSS…GILV, MFFL…PLEW, VGAA…FCRI, FYSY…LPIY, VTVI…LWLM, GICL…AGPL, WMLV…SFLW, WAVM…WWSV, FEAF…GFVV, and VNVL…ALAV.

This sequence belongs to the major facilitator superfamily. MFSD6 family.

It is found in the membrane. This Danio rerio (Zebrafish) protein is Major facilitator superfamily domain-containing protein 6-like (mfsd6l).